We begin with the raw amino-acid sequence, 478 residues long: NAD-dependent malic enzyme (478 aa).

In terms of domain architecture, ACT spans 12–86 (TIRLQFEKDI…GVKIVNVSDR (75 aa)). Tyr114 serves as the catalytic Proton donor. Residue Lys169 is the Proton acceptor of the active site. A divalent metal cation contacts are provided by Glu211, Asp212, and Asp237. Residues 270–273 (IGAA), Asn363, and Asn393 contribute to the NAD(+) site.

It belongs to the malic enzymes family. In terms of assembly, homotetramer. The cofactor is Mg(2+). Mn(2+) is required as a cofactor.

The catalysed reaction is (S)-malate + NAD(+) = pyruvate + CO2 + NADH. It carries out the reaction oxaloacetate + H(+) = pyruvate + CO2. Its activity is regulated as follows. The activity is enhanced 5-7 times by ammonium and potassium. In terms of biological role, in addition to the NAD-dependent oxidative decarboxylation of L-malate, the enzyme catalyzes the decarboxylation of oxaloacetate. In Geobacillus stearothermophilus (Bacillus stearothermophilus), this protein is NAD-dependent malic enzyme.